Consider the following 638-residue polypeptide: Sodium- and chloride-dependent neutral and basic amino acid transporter B(0+) (638 aa).

Topologically, residues 1–44 (MDRLKCPNFFKCRQKEKVTASSENFHVGENDENQERGNWSKKSD) are cytoplasmic. The next 3 helical transmembrane spans lie at 45 to 65 (YLLS…FPYL), 72 to 92 (GAFL…LFFL), and 110 to 130 (ILPL…FVAI). At 131 to 230 (YYNVIIAYSL…RSSGMDETGV (100 aa)) the chain is on the extracellular side. N-linked (GlcNAc...) asparagine glycosylation is found at N155, N163, N174, N185, N193, and N198. The next 2 membrane-spanning stretches (helical) occupy residues 231 to 251 (VVWY…AALF) and 257 to 277 (SGKV…ILLI). N298 carries an N-linked (GlcNAc...) asparagine glycan. 7 helical membrane passes run 311 to 331 (AATQ…ALSS), 344 to 364 (IIVC…IFSI), 395 to 415 (LAQL…LLTL), 453 to 473 (ILFL…VHLI), 476 to 496 (FCAG…IIWI), 524 to 544 (CWFV…LVKF), and 559 to 579 (VALG…MAII). Over 580-638 (KIVQAEGNILQRIISCCRPASNWGPYLEKHRGERYRDMAEPAKETDHEIPTISGSTKPE) the chain is Cytoplasmic. Residues 618–628 (AEPAKETDHEI) are compositionally biased toward basic and acidic residues. Residues 618 to 638 (AEPAKETDHEIPTISGSTKPE) are disordered.

This sequence belongs to the sodium:neurotransmitter symporter (SNF) (TC 2.A.22) family. SLC6A14 subfamily. As to expression, expressed in the distal region of the intestinal tract: cecum and colon.

The protein localises to the membrane. The protein resides in the apical cell membrane. The catalysed reaction is glycine(out) + chloride(out) + 2 Na(+)(out) = glycine(in) + chloride(in) + 2 Na(+)(in). It carries out the reaction L-leucine(out) + chloride(out) + 2 Na(+)(out) = L-leucine(in) + chloride(in) + 2 Na(+)(in). The enzyme catalyses L-glutamine(out) + chloride(out) + 2 Na(+)(out) = L-glutamine(in) + chloride(in) + 2 Na(+)(in). It catalyses the reaction L-arginine(out) + chloride(out) + 2 Na(+)(out) = L-arginine(in) + chloride(in) + 2 Na(+)(in). The catalysed reaction is (R)-carnitine(out) + chloride(out) + 2 Na(+)(out) = (R)-carnitine(in) + chloride(in) + 2 Na(+)(in). It carries out the reaction O-propanoyl-(R)-carnitine(out) + chloride(out) + 2 Na(+)(out) = O-propanoyl-(R)-carnitine(in) + chloride(in) + 2 Na(+)(in). The enzyme catalyses L-isoleucine(out) + chloride(out) + 2 Na(+)(out) = L-isoleucine(in) + chloride(in) + 2 Na(+)(in). It catalyses the reaction L-methionine(out) + chloride(out) + 2 Na(+)(out) = L-methionine(in) + chloride(in) + 2 Na(+)(in). The catalysed reaction is L-valine(out) + chloride(out) + 2 Na(+)(out) = L-valine(in) + chloride(in) + 2 Na(+)(in). It carries out the reaction L-alanine(out) + chloride(out) + 2 Na(+)(out) = L-alanine(in) + chloride(in) + 2 Na(+)(in). The enzyme catalyses L-serine(out) + chloride(out) + 2 Na(+)(out) = L-serine(in) + chloride(in) + 2 Na(+)(in). It catalyses the reaction L-cysteine(out) + chloride(out) + 2 Na(+)(out) = L-cysteine(in) + chloride(in) + 2 Na(+)(in). The catalysed reaction is L-asparagine(out) + chloride(out) + 2 Na(+)(out) = L-asparagine(in) + chloride(in) + 2 Na(+)(in). It carries out the reaction L-threonine(out) + chloride(out) + 2 Na(+)(out) = L-threonine(in) + chloride(in) + 2 Na(+)(in). The enzyme catalyses L-phenylalanine(out) + chloride(out) + 2 Na(+)(out) = L-phenylalanine(in) + chloride(in) + 2 Na(+)(in). It catalyses the reaction L-tryptophan(out) + chloride(out) + 2 Na(+)(out) = L-tryptophan(in) + chloride(in) + 2 Na(+)(in). The catalysed reaction is L-tyrosine(out) + chloride(out) + 2 Na(+)(out) = L-tyrosine(in) + chloride(in) + 2 Na(+)(in). It carries out the reaction L-histidine(out) + chloride(out) + 2 Na(+)(out) = L-histidine(in) + chloride(in) + 2 Na(+)(in). The enzyme catalyses L-lysine(out) + chloride(out) + 2 Na(+)(out) = L-lysine(in) + chloride(in) + 2 Na(+)(in). It catalyses the reaction O-butanoyl-(R)-carnitine(out) + chloride(out) + 2 Na(+)(out) = O-butanoyl-(R)-carnitine(in) + chloride(in) + 2 Na(+)(in). Amino acid transporter that plays an important role in the absorption of amino acids in the intestinal tract. Mediates the uptake of a broad range of neutral and cationic amino acids (with the exception of proline) in a Na(+)/Cl(-)-dependent manner. Transports non-alpha-amino acids such as beta-alanine with low affinity, and has a higher affinity for dipolar and cationic amino acids such as leucine and lysine. Can also transport carnitine, butyrylcarnitine and propionylcarnitine coupled to the transmembrane gradients of Na(+) and Cl(-). In Mus musculus (Mouse), this protein is Sodium- and chloride-dependent neutral and basic amino acid transporter B(0+).